Consider the following 444-residue polypeptide: Phosphoglucosamine mutase (444 aa).

The Phosphoserine intermediate role is filled by Ser104. Positions 104, 243, 245, and 247 each coordinate Mg(2+). The residue at position 104 (Ser104) is a Phosphoserine.

Belongs to the phosphohexose mutase family. Mg(2+) serves as cofactor. Activated by phosphorylation.

The enzyme catalyses alpha-D-glucosamine 1-phosphate = D-glucosamine 6-phosphate. Its function is as follows. Catalyzes the conversion of glucosamine-6-phosphate to glucosamine-1-phosphate. This is Phosphoglucosamine mutase from Neisseria meningitidis serogroup C (strain 053442).